The chain runs to 504 residues: Xylose import ATP-binding protein XylG (504 aa).

2 ABC transporter domains span residues 6–243 (LEMQ…VGRE) and 262–504 (VRNF…TGGK). 38–45 (GENGAGKS) is a binding site for ATP.

Belongs to the ABC transporter superfamily. Xylose importer (TC 3.A.1.2.4) family. The complex is composed of two ATP-binding proteins (XylG), two transmembrane proteins (XylH) and a solute-binding protein (XylF).

The protein resides in the cell membrane. The catalysed reaction is D-xylose(out) + ATP + H2O = D-xylose(in) + ADP + phosphate + H(+). Its function is as follows. Part of the ABC transporter complex XylFGH involved in xylose import. Responsible for energy coupling to the transport system. This chain is Xylose import ATP-binding protein XylG, found in Moorella thermoacetica (strain ATCC 39073 / JCM 9320).